Consider the following 437-residue polypeptide: Putative ABC transporter ATP-binding protein CTC_00753 (437 aa).

2 ABC transporter domains span residues 1-143 (MERE…LPTI) and 179-416 (LKFK…QISK). Residue 219–226 (GENGAGKS) participates in ATP binding.

The protein belongs to the ABC transporter superfamily.

It is found in the cell membrane. Its function is as follows. Probably part of an ABC transporter complex. Responsible for energy coupling to the transport system. This Clostridium tetani (strain Massachusetts / E88) protein is Putative ABC transporter ATP-binding protein CTC_00753.